Consider the following 262-residue polypeptide: MGFVGDFCDDVARSIGFLSRIPMPARHFEGYDGRLSRAVRAFPFAGLAIALPSAAVAMALMALQVSSLFAAFVVVAIQALVTGALHEDGLGDTADGFGGGRDREAALAIMKDSRIGTYAAVALILSFGLRVSAFASILPLFSPLGAAMAILGAACLSRAAMVWHWSSLPPARSSGVAASAGEPEPAATRFALAFGLLVAMLLFYLAQVPALGVIAALVAFLATVKGFARLAMRKIGGQTGDTIGATQQLTEIAVLGALALTV.

A run of 5 helical transmembrane segments spans residues 41 to 63 (AFPFAGLAIALPSAAVAMALMAL), 68 to 85 (LFAAFVVVAIQALVTGAL), 115 to 134 (IGTYAAVALILSFGLRVSAF), 141 to 163 (FSPLGAAMAILGAACLSRAAMVW), and 201 to 221 (LLFYLAQVPALGVIAALVAFL).

The protein belongs to the CobS family. As to quaternary structure, associated with a large complex of proteins. Requires Mg(2+) as cofactor.

Its subcellular location is the cell inner membrane. It catalyses the reaction alpha-ribazole + adenosylcob(III)inamide-GDP = adenosylcob(III)alamin + GMP + H(+). It carries out the reaction alpha-ribazole 5'-phosphate + adenosylcob(III)inamide-GDP = adenosylcob(III)alamin 5'-phosphate + GMP + H(+). Its pathway is cofactor biosynthesis; adenosylcobalamin biosynthesis; adenosylcobalamin from cob(II)yrinate a,c-diamide: step 7/7. In terms of biological role, joins adenosylcobinamide-GDP and alpha-ribazole to generate adenosylcobalamin (Ado-cobalamin). Also synthesizes adenosylcobalamin 5'-phosphate from adenosylcobinamide-GDP and alpha-ribazole 5'-phosphate. This chain is Adenosylcobinamide-GDP ribazoletransferase (cobV), found in Sinorhizobium sp.